The following is a 247-amino-acid chain: ATP synthase subunit a, plastid (247 aa).

The next 5 membrane-spanning stretches (helical) occupy residues 33-53 (FLVH…LLGS), 95-115 (VPFI…GALL), 134-154 (INTT…AGIL), 199-219 (LVVV…VMLL), and 220-240 (GLFT…AYIG).

This sequence belongs to the ATPase A chain family. In terms of assembly, F-type ATPases have 2 components, CF(1) - the catalytic core - and CF(0) - the membrane proton channel. CF(1) has five subunits: alpha(3), beta(3), gamma(1), delta(1), epsilon(1). CF(0) has four main subunits: a, b, b' and c.

The protein localises to the plastid membrane. Key component of the proton channel; it plays a direct role in the translocation of protons across the membrane. In Cuscuta exaltata (Tall dodder), this protein is ATP synthase subunit a, plastid.